A 789-amino-acid chain; its full sequence is Cell pattern formation-associated protein stuA (789 aa).

Disordered regions lie at residues proline 50 to glycine 131 and proline 205 to serine 224. Polar residues-rich tracts occupy residues proline 55–threonine 69, alanine 76–glycine 88, and leucine 115–glycine 131. One can recognise an HTH APSES-type domain in the interval arginine 272–proline 378. Residues glycine 306–glutamate 327 constitute a DNA-binding region (H-T-H motif). Disordered stretches follow at residues glutamine 389–leucine 459, serine 487–glutamine 543, and histidine 616–arginine 789. Composition is skewed to polar residues over residues leucine 419 to alanine 438, serine 487 to tyrosine 529, glycine 620 to valine 636, glutamine 645 to threonine 667, and serine 676 to serine 713. Residues lysine 731–lysine 758 form a nuclear localization domain region. The segment covering glutamine 741–serine 754 has biased composition (basic and acidic residues).

Belongs to the EFG1/PHD1/stuA family.

It localises to the nucleus. Functionally, transcription factor that regulates asexual reproduction. Binds the StuA-response elements (StRE) with the consensus sequence 5'-(A/T)CGCG(T/A)N(A/C)-3' at the promoters of target genes. In Aspergillus flavus (strain ATCC 200026 / FGSC A1120 / IAM 13836 / NRRL 3357 / JCM 12722 / SRRC 167), this protein is Cell pattern formation-associated protein stuA.